The primary structure comprises 79 residues: Neurotoxin BmK-M9 (79 aa).

Residues 1 to 14 (MISFALLLMTGVES) form the signal peptide. Residues 16–78 (RDAYIAKPEN…VPIRVPGKCH (63 aa)) form the LCN-type CS-alpha/beta domain. 4 disulfide bridges follow: cysteine 26–cysteine 77, cysteine 30–cysteine 50, cysteine 36–cysteine 60, and cysteine 40–cysteine 62. Residue arginine 79 is a propeptide, removed by a carboxypeptidase.

Belongs to the long (4 C-C) scorpion toxin superfamily. Sodium channel inhibitor family. Alpha subfamily. Expressed by the venom gland.

The protein resides in the secreted. Functionally, binds to sodium channels (Nav) and inhibits the inactivation of the activated channels, thereby blocking neuronal transmission. This toxin is active against mammals. The chain is Neurotoxin BmK-M9 from Olivierus martensii (Manchurian scorpion).